The sequence spans 481 residues: Glutamyl-tRNA(Gln) amidotransferase subunit A (481 aa).

Active-site charge relay system residues include K76 and S151. The active-site Acyl-ester intermediate is the S175.

Belongs to the amidase family. GatA subfamily. Heterotrimer of A, B and C subunits.

It catalyses the reaction L-glutamyl-tRNA(Gln) + L-glutamine + ATP + H2O = L-glutaminyl-tRNA(Gln) + L-glutamate + ADP + phosphate + H(+). In terms of biological role, allows the formation of correctly charged Gln-tRNA(Gln) through the transamidation of misacylated Glu-tRNA(Gln) in organisms which lack glutaminyl-tRNA synthetase. The reaction takes place in the presence of glutamine and ATP through an activated gamma-phospho-Glu-tRNA(Gln). This is Glutamyl-tRNA(Gln) amidotransferase subunit A from Neisseria gonorrhoeae (strain NCCP11945).